The chain runs to 123 residues: MPTINQLIAQPREVQKSRKKVPALQQSPQKRGVCTRVYTTTPKKPNSALRKVAKVRLTNGFEVIGYIPGEGHNLQEHSVVMIRGGRVKDLPGVRYHILRGVLDTQGVKNRKQRRSKYGAKRPK.

At Asp-89 the chain carries 3-methylthioaspartic acid.

The protein belongs to the universal ribosomal protein uS12 family. Part of the 30S ribosomal subunit. Contacts proteins S8 and S17. May interact with IF1 in the 30S initiation complex.

With S4 and S5 plays an important role in translational accuracy. Functionally, interacts with and stabilizes bases of the 16S rRNA that are involved in tRNA selection in the A site and with the mRNA backbone. Located at the interface of the 30S and 50S subunits, it traverses the body of the 30S subunit contacting proteins on the other side and probably holding the rRNA structure together. The combined cluster of proteins S8, S12 and S17 appears to hold together the shoulder and platform of the 30S subunit. This chain is Small ribosomal subunit protein uS12, found in Bradyrhizobium diazoefficiens (strain JCM 10833 / BCRC 13528 / IAM 13628 / NBRC 14792 / USDA 110).